The chain runs to 154 residues: 6,7-dimethyl-8-ribityllumazine synthase (154 aa).

5-amino-6-(D-ribitylamino)uracil contacts are provided by residues F26, 60-62 (ALE), and 84-86 (CII). A (2S)-2-hydroxy-3-oxobutyl phosphate-binding site is contributed by 89-90 (ET). H92 serves as the catalytic Proton donor. N117 serves as a coordination point for 5-amino-6-(D-ribitylamino)uracil. A (2S)-2-hydroxy-3-oxobutyl phosphate-binding site is contributed by R131.

This sequence belongs to the DMRL synthase family.

It carries out the reaction (2S)-2-hydroxy-3-oxobutyl phosphate + 5-amino-6-(D-ribitylamino)uracil = 6,7-dimethyl-8-(1-D-ribityl)lumazine + phosphate + 2 H2O + H(+). It functions in the pathway cofactor biosynthesis; riboflavin biosynthesis; riboflavin from 2-hydroxy-3-oxobutyl phosphate and 5-amino-6-(D-ribitylamino)uracil: step 1/2. Its function is as follows. Catalyzes the formation of 6,7-dimethyl-8-ribityllumazine by condensation of 5-amino-6-(D-ribitylamino)uracil with 3,4-dihydroxy-2-butanone 4-phosphate. This is the penultimate step in the biosynthesis of riboflavin. This Polaromonas sp. (strain JS666 / ATCC BAA-500) protein is 6,7-dimethyl-8-ribityllumazine synthase.